A 132-amino-acid chain; its full sequence is Small ribosomal subunit protein uS8 (132 aa).

It belongs to the universal ribosomal protein uS8 family. As to quaternary structure, part of the 30S ribosomal subunit. Contacts proteins S5 and S12.

Its function is as follows. One of the primary rRNA binding proteins, it binds directly to 16S rRNA central domain where it helps coordinate assembly of the platform of the 30S subunit. The polypeptide is Small ribosomal subunit protein uS8 (Caulobacter sp. (strain K31)).